Consider the following 137-residue polypeptide: ATP synthase epsilon chain (137 aa).

The protein belongs to the ATPase epsilon chain family. As to quaternary structure, F-type ATPases have 2 components, CF(1) - the catalytic core - and CF(0) - the membrane proton channel. CF(1) has five subunits: alpha(3), beta(3), gamma(1), delta(1), epsilon(1). CF(0) has three main subunits: a, b and c.

The protein localises to the cellular thylakoid membrane. Its function is as follows. Produces ATP from ADP in the presence of a proton gradient across the membrane. This chain is ATP synthase epsilon chain, found in Nostoc punctiforme (strain ATCC 29133 / PCC 73102).